We begin with the raw amino-acid sequence, 200 residues long: Charged multivesicular body protein 6-A (200 aa).

Residue glycine 2 is the site of N-myristoyl glycine attachment. Residues 9-102 are a coiled coil; the sequence is RRSRVTEQDK…FAQIEMKVIE (94 aa). Residues 166 to 200 are disordered; sequence EDLELPEAPSEPLPDTIPEKQAVKNKPKPQMIAAS. Positions 168–179 match the Type-2 MIT-interacting motif motif; that stretch reads LELPEAPSEPLP.

Belongs to the SNF7 family. In terms of assembly, probable core component of the endosomal sorting required for transport complex III (ESCRT-III). ESCRT-III components are thought to multimerize to form a flat lattice on the perimeter membrane of the endosome.

Its subcellular location is the endomembrane system. It is found in the late endosome membrane. Functionally, probable core component of the endosomal sorting required for transport complex III (ESCRT-III) which is involved in multivesicular bodies (MVBs) formation and sorting of endosomal cargo proteins into MVBs. MVBs contain intraluminal vesicles (ILVs) that are generated by invagination and scission from the limiting membrane of the endosome and mostly are delivered to lysosomes enabling degradation of membrane proteins, such as stimulated growth factor receptors, lysosomal enzymes and lipids. In the ESCRT-III complex, it probably serves as an acceptor for the ESCRT-II complex on endosomal membranes. The protein is Charged multivesicular body protein 6-A (chmp6-a) of Xenopus laevis (African clawed frog).